Here is a 153-residue protein sequence, read N- to C-terminus: uncharacterized protein (153 aa).

Residues 1–19 form the signal peptide; sequence MKACLLLFFYFSFICQLHG.

This is an uncharacterized protein from Escherichia coli (strain K12).